A 212-amino-acid polypeptide reads, in one-letter code: Ion-translocating oxidoreductase complex subunit G (212 aa).

Residues 9–29 (GLLLGLFALLCTGLVAIVNQL) traverse the membrane as a helical segment. FMN phosphoryl threonine is present on T176.

The protein belongs to the RnfG family. As to quaternary structure, the complex is composed of six subunits: RnfA, RnfB, RnfC, RnfD, RnfE and RnfG. FMN is required as a cofactor.

The protein resides in the cell inner membrane. Part of a membrane-bound complex that couples electron transfer with translocation of ions across the membrane. In Shewanella piezotolerans (strain WP3 / JCM 13877), this protein is Ion-translocating oxidoreductase complex subunit G.